We begin with the raw amino-acid sequence, 356 residues long: Heparan sulfate 2-O-sulfotransferase 1 (356 aa).

Residues 1–11 lie on the Cytoplasmic side of the membrane; the sequence is MGLLRIMLPPK. Residues 12–28 form a helical; Signal-anchor for type II membrane protein membrane-spanning segment; that stretch reads LQLLAVLVFGVAVLFLE. Residues 24–51 are a coiled coil; that stretch reads VLFLENQIQKLEESRGKLERAIARHEVR. Topologically, residues 29 to 356 are lumenal; the sequence is NQIQKLEESR…FYEKIYPKSN (328 aa). Positions 83, 84, 85, 86, 87, and 88 each coordinate adenosine 3',5'-bisphosphate. N-linked (GlcNAc...) asparagine glycans are attached at residues Asn108 and Asn127. Catalysis depends on residues His140 and His142. Residues Arg164 and Ser172 each contribute to the adenosine 3',5'-bisphosphate site. 2 disulfides stabilise this stretch: Cys201/Cys209 and Cys222/Cys228. Adenosine 3',5'-bisphosphate-binding residues include Tyr279, Ser285, Thr290, and Lys293.

Belongs to the sulfotransferase 3 family. Homotrimer. Expressed in heart, limb, head and trunk. At stages 20 and 24, it is expressed in the most regions of the first and second pharyngeal arche. In both wing and leg buds, it is detected at the overlying ectoderm and mesenchyme throughout stages 21, 23 and 24.

Its subcellular location is the golgi apparatus membrane. In terms of biological role, catalyzes the transfer of a sulfo group from 3'-phospho-5'-adenylyl sulfate (PAPS) to the 2-OH position of iduronic acid (IdoA) or glucuronic acid (GlcA) within the heparan sulfate (HS) chain and participates in HS biosynthesis. The protein is Heparan sulfate 2-O-sulfotransferase 1 of Gallus gallus (Chicken).